Consider the following 232-residue polypeptide: Sugar fermentation stimulation protein homolog (232 aa).

The protein belongs to the SfsA family.

This chain is Sugar fermentation stimulation protein homolog, found in Pelagibacter ubique (strain HTCC1062).